The following is a 351-amino-acid chain: Nicotinate-nucleotide--dimethylbenzimidazole phosphoribosyltransferase (351 aa).

E318 (proton acceptor) is an active-site residue.

It belongs to the CobT family.

The enzyme catalyses 5,6-dimethylbenzimidazole + nicotinate beta-D-ribonucleotide = alpha-ribazole 5'-phosphate + nicotinate + H(+). Its pathway is nucleoside biosynthesis; alpha-ribazole biosynthesis; alpha-ribazole from 5,6-dimethylbenzimidazole: step 1/2. Functionally, catalyzes the synthesis of alpha-ribazole-5'-phosphate from nicotinate mononucleotide (NAMN) and 5,6-dimethylbenzimidazole (DMB). The chain is Nicotinate-nucleotide--dimethylbenzimidazole phosphoribosyltransferase from Shewanella frigidimarina (strain NCIMB 400).